Here is a 217-residue protein sequence, read N- to C-terminus: Phosphatidylserine decarboxylase proenzyme (217 aa).

S182 serves as the catalytic Schiff-base intermediate with substrate; via pyruvic acid. Residue S182 is modified to Pyruvic acid (Ser); by autocatalysis.

Belongs to the phosphatidylserine decarboxylase family. PSD-A subfamily. In terms of assembly, heterodimer of a large membrane-associated beta subunit and a small pyruvoyl-containing alpha subunit. Requires pyruvate as cofactor. In terms of processing, is synthesized initially as an inactive proenzyme. Formation of the active enzyme involves a self-maturation process in which the active site pyruvoyl group is generated from an internal serine residue via an autocatalytic post-translational modification. Two non-identical subunits are generated from the proenzyme in this reaction, and the pyruvate is formed at the N-terminus of the alpha chain, which is derived from the carboxyl end of the proenzyme. The post-translation cleavage follows an unusual pathway, termed non-hydrolytic serinolysis, in which the side chain hydroxyl group of the serine supplies its oxygen atom to form the C-terminus of the beta chain, while the remainder of the serine residue undergoes an oxidative deamination to produce ammonia and the pyruvoyl prosthetic group on the alpha chain.

The protein resides in the cell membrane. The catalysed reaction is a 1,2-diacyl-sn-glycero-3-phospho-L-serine + H(+) = a 1,2-diacyl-sn-glycero-3-phosphoethanolamine + CO2. It functions in the pathway phospholipid metabolism; phosphatidylethanolamine biosynthesis; phosphatidylethanolamine from CDP-diacylglycerol: step 2/2. Catalyzes the formation of phosphatidylethanolamine (PtdEtn) from phosphatidylserine (PtdSer). This Prosthecochloris aestuarii (strain DSM 271 / SK 413) protein is Phosphatidylserine decarboxylase proenzyme.